Here is a 124-residue protein sequence, read N- to C-terminus: Small ribosomal subunit protein uS12 (124 aa).

At aspartate 89 the chain carries 3-methylthioaspartic acid.

Belongs to the universal ribosomal protein uS12 family. Part of the 30S ribosomal subunit. Contacts proteins S8 and S17. May interact with IF1 in the 30S initiation complex.

Its function is as follows. With S4 and S5 plays an important role in translational accuracy. Interacts with and stabilizes bases of the 16S rRNA that are involved in tRNA selection in the A site and with the mRNA backbone. Located at the interface of the 30S and 50S subunits, it traverses the body of the 30S subunit contacting proteins on the other side and probably holding the rRNA structure together. The combined cluster of proteins S8, S12 and S17 appears to hold together the shoulder and platform of the 30S subunit. This chain is Small ribosomal subunit protein uS12, found in Aliivibrio fischeri (strain ATCC 700601 / ES114) (Vibrio fischeri).